A 28-amino-acid chain; its full sequence is Cruzioseptin-10 (28 aa).

Expressed by the skin glands.

The protein localises to the secreted. Has antimicrobial activity. The protein is Cruzioseptin-10 of Cruziohyla calcarifer (Splendid leaf frog).